The following is a 525-amino-acid chain: tRNA-splicing endonuclease subunit Sen54 (525 aa).

At Met1 the chain carries N-acetylmethionine. A disordered region spans residues 1 to 46 (MEPEPEPGSVEVPAGRVLSASELRAARSRSQKLPQRSHGPKDFLPD). A compositionally biased stretch (low complexity) spans 7 to 23 (PGSVEVPAGRVLSASEL). Residue Ser178 is modified to Phosphoserine. Tyr180 carries the post-translational modification Phosphotyrosine. Over residues 220-232 (LPPVSLAASSSPA) the composition is skewed to low complexity. The segment at 220–273 (LPPVSLAASSSPACDQSSQYPEEKSQDSSPRQGSELPLQFLGSSEPCSDLARED) is disordered.

Belongs to the SEN54 family. TRNA splicing endonuclease is a heterotetramer composed of TSEN2, TSEN15, TSEN34/LENG5 and TSEN54. tRNA splicing endonuclease complex also contains proteins of the pre-mRNA 3'-end processing machinery such as CLP1, CPSF1, CPSF4 and CSTF2.

The protein localises to the nucleus. It localises to the nucleolus. In terms of biological role, non-catalytic subunit of the tRNA-splicing endonuclease complex, a complex responsible for identification and cleavage of the splice sites in pre-tRNA. It cleaves pre-tRNA at the 5' and 3' splice sites to release the intron. The products are an intron and two tRNA half-molecules bearing 2',3' cyclic phosphate and 5'-OH termini. There are no conserved sequences at the splice sites, but the intron is invariably located at the same site in the gene, placing the splice sites an invariant distance from the constant structural features of the tRNA body. The tRNA splicing endonuclease is also involved in mRNA processing via its association with pre-mRNA 3'-end processing factors, establishing a link between pre-tRNA splicing and pre-mRNA 3'-end formation, suggesting that the endonuclease subunits function in multiple RNA-processing events. This chain is tRNA-splicing endonuclease subunit Sen54 (Tsen54), found in Mus musculus (Mouse).